Reading from the N-terminus, the 244-residue chain is High frequency lysogenization protein HflD homolog (244 aa).

The protein belongs to the HflD family.

Its subcellular location is the cytoplasm. The protein resides in the cell inner membrane. The chain is High frequency lysogenization protein HflD homolog from Acinetobacter baumannii (strain SDF).